The chain runs to 1430 residues: Bromodomain-containing protein homolog (1430 aa).

The segment at 23–49 adopts a C2H2-type zinc-finger fold; the sequence is FACPVRGCDRSYKTIMGLQYHLMKYDH. Residues 51-111 form a disordered region; the sequence is NPQPLTPVLT…AGGGSASGVS (61 aa). Positions 62–81 are enriched in basic residues; the sequence is SRKKARSRSGGHHSTPRPHK. The PHD-type 1 zinc finger occupies 283 to 333; sequence DAVCCICLDGECQNTNVILFCDMCNLAVHQDCYGVPYIPEGQWLCRRCLQS. Zn(2+) is bound by residues Cys286, Cys289, Cys303, Cys306, His311, Cys314, Cys327, and Cys330. The C2HC pre-PHD-type zinc finger occupies 337-370; the sequence is PVNCVLCPNAGGAFKQTDHGQWAHVVCALWIPEV. The PHD-type 2 zinc-finger motif lies at 394 to 457; that stretch reads LTCYVCKEKG…QKFAYCHAHT (64 aa). The region spanning 611–715 is the Bromo domain; that stretch reads LQLNPLEAAL…DQAAPLFVQV (105 aa). The segment covering 796–805 has biased composition (basic residues); it reads KARFAARHSS. Disordered stretches follow at residues 796–887, 901–942, 1012–1054, and 1076–1301; these read KARF…SSPV, AQAA…TTAA, ANLP…QALP, and QRDV…GQKP. Over residues 842-857 the composition is skewed to acidic residues; sequence HDDDDEEEDSDEDSMG. Positions 865–887 are enriched in polar residues; the sequence is LLNSTQTPPCSPIKSLNNSSSPV. Low complexity-rich tracts occupy residues 922–942, 1034–1043, and 1085–1107; these read NSQS…TTAA, SSSMSPKKSP, and APSQ…SCSD. Residues 1108–1120 are compositionally biased toward acidic residues; the sequence is FDSDEASEGDADG. Over residues 1121-1137 the composition is skewed to basic and acidic residues; that stretch reads DPDRDGGRSRSEERDST. Composition is skewed to polar residues over residues 1151–1165 and 1265–1278; these read ASLN…NMAI and NTTA…TNNN. Over residues 1281–1293 the composition is skewed to basic and acidic residues; sequence KHSEDSASSERHN. The PWWP domain occupies 1305-1378; sequence PLQLVWAKCR…TWQWLPANKL (74 aa).

As to quaternary structure, component of the Enok complex composed of at least Br140, enok, Eaf6 and Ing5. As part of the Enok complex, interacts with elg1 and the Elg1 RFC-like complex.

Its subcellular location is the nucleus. Functionally, scaffold subunit of the histone acetyltransferase (HAT) Enok complex which has histone H3 acetyltransferase activity. As part of the Enok complex, associates with the Elg1 RFC-like complex and down-regulates its PCNA-unloading function to promote the G1/S transition. May also play a role in maintaining the protein levels and stability of enok. This Drosophila melanogaster (Fruit fly) protein is Bromodomain-containing protein homolog.